Here is a 350-residue protein sequence, read N- to C-terminus: Small ribosomal subunit biogenesis GTPase RsgA (350 aa).

Polar residues predominate over residues 1-17 (MSKNKLSKGQQRRVNAN). The disordered stretch occupies residues 1–27 (MSKNKLSKGQQRRVNANHQRRLKTSAE). The CP-type G domain occupies 104-273 (TSVLTRPDFY…VIDSPGVREF (170 aa)). GTP-binding positions include 160–163 (NKID) and 214–222 (GQSGVGKSS). Zn(2+) contacts are provided by Cys297, Cys302, His304, and Cys310.

The protein belongs to the TRAFAC class YlqF/YawG GTPase family. RsgA subfamily. Monomer. Associates with 30S ribosomal subunit, binds 16S rRNA. Requires Zn(2+) as cofactor.

It localises to the cytoplasm. In terms of biological role, one of several proteins that assist in the late maturation steps of the functional core of the 30S ribosomal subunit. Helps release RbfA from mature subunits. May play a role in the assembly of ribosomal proteins into the subunit. Circularly permuted GTPase that catalyzes slow GTP hydrolysis, GTPase activity is stimulated by the 30S ribosomal subunit. The protein is Small ribosomal subunit biogenesis GTPase RsgA of Salmonella dublin (strain CT_02021853).